We begin with the raw amino-acid sequence, 471 residues long: Glutamate--tRNA ligase (471 aa).

Positions 9–19 (PSPTGYLHVGG) match the 'HIGH' region motif. The Zn(2+) site is built by Cys-98, Cys-100, Cys-125, and His-127. The 'KMSKS' region signature appears at 237-241 (KLSKR). Lys-240 is an ATP binding site.

Belongs to the class-I aminoacyl-tRNA synthetase family. Glutamate--tRNA ligase type 1 subfamily. As to quaternary structure, monomer. Requires Zn(2+) as cofactor.

It is found in the cytoplasm. The catalysed reaction is tRNA(Glu) + L-glutamate + ATP = L-glutamyl-tRNA(Glu) + AMP + diphosphate. In terms of biological role, catalyzes the attachment of glutamate to tRNA(Glu) in a two-step reaction: glutamate is first activated by ATP to form Glu-AMP and then transferred to the acceptor end of tRNA(Glu). The polypeptide is Glutamate--tRNA ligase (Shigella flexneri).